The chain runs to 250 residues: MTTLIISDLHLDPLRPVVTELFLRFLREQVSGADALYILGDLFEVWIGDDMPSEVADMVAAALRTYADAGTPLYFMPGNRDFLVGADYAARAGFRILPDPCVVDLYGEPTLLLHGDLLCTDDIAYQAFRAQTRDPEFIAQFLTQTLSARLAFSQQARLASHAHQSGLKQENDSTQFEKITDVVPADVAAMFACYGVNRMIHGHTHRPALHMLQVAECACTRVVLGDWYQQGSVLCVDADGLVLEQLLLPG.

Residues D8, H10, D41, N79, and H114 each contribute to the Mn(2+) site. 79-80 is a binding site for substrate; it reads NR. D122, S160, D172, Q175, and H203 together coordinate substrate. Mn(2+) is bound by residues H203 and H205.

The protein belongs to the LpxH family. Mn(2+) is required as a cofactor.

The protein resides in the cell inner membrane. It catalyses the reaction UDP-2-N,3-O-bis[(3R)-3-hydroxytetradecanoyl]-alpha-D-glucosamine + H2O = 2-N,3-O-bis[(3R)-3-hydroxytetradecanoyl]-alpha-D-glucosaminyl 1-phosphate + UMP + 2 H(+). It participates in glycolipid biosynthesis; lipid IV(A) biosynthesis; lipid IV(A) from (3R)-3-hydroxytetradecanoyl-[acyl-carrier-protein] and UDP-N-acetyl-alpha-D-glucosamine: step 4/6. Functionally, hydrolyzes the pyrophosphate bond of UDP-2,3-diacylglucosamine to yield 2,3-diacylglucosamine 1-phosphate (lipid X) and UMP by catalyzing the attack of water at the alpha-P atom. Involved in the biosynthesis of lipid A, a phosphorylated glycolipid that anchors the lipopolysaccharide to the outer membrane of the cell. This Xylella fastidiosa (strain M12) protein is UDP-2,3-diacylglucosamine hydrolase.